The sequence spans 202 residues: N-(5'-phosphoribosyl)anthranilate isomerase (202 aa).

The protein belongs to the TrpF family.

The enzyme catalyses N-(5-phospho-beta-D-ribosyl)anthranilate = 1-(2-carboxyphenylamino)-1-deoxy-D-ribulose 5-phosphate. It functions in the pathway amino-acid biosynthesis; L-tryptophan biosynthesis; L-tryptophan from chorismate: step 3/5. The sequence is that of N-(5'-phosphoribosyl)anthranilate isomerase from Geobacter metallireducens (strain ATCC 53774 / DSM 7210 / GS-15).